Reading from the N-terminus, the 320-residue chain is ATP-dependent 6-phosphofructokinase (320 aa).

ATP is bound at residue Gly-11. 21–25 (RAVTK) provides a ligand contact to ADP. ATP contacts are provided by residues 72-73 (RF) and 102-105 (GDGS). Asp-103 is a binding site for Mg(2+). 125 to 127 (TID) provides a ligand contact to substrate. The active-site Proton acceptor is Asp-127. Arg-154 provides a ligand contact to ADP. Residues Arg-162 and 169–171 (MGR) contribute to the substrate site. ADP contacts are provided by residues 185–187 (GAD) and 213–215 (KDH). Substrate contacts are provided by residues Glu-222, Arg-243, and 249-252 (HMQR).

The protein belongs to the phosphofructokinase type A (PFKA) family. ATP-dependent PFK group I subfamily. Prokaryotic clade 'B1' sub-subfamily. Homotetramer. Mg(2+) is required as a cofactor.

The protein resides in the cytoplasm. It carries out the reaction beta-D-fructose 6-phosphate + ATP = beta-D-fructose 1,6-bisphosphate + ADP + H(+). It functions in the pathway carbohydrate degradation; glycolysis; D-glyceraldehyde 3-phosphate and glycerone phosphate from D-glucose: step 3/4. Its activity is regulated as follows. Allosterically activated by ADP and other diphosphonucleosides, and allosterically inhibited by phosphoenolpyruvate. Catalyzes the phosphorylation of D-fructose 6-phosphate to fructose 1,6-bisphosphate by ATP, the first committing step of glycolysis. The chain is ATP-dependent 6-phosphofructokinase from Lactobacillus acidophilus (strain ATCC 700396 / NCK56 / N2 / NCFM).